A 357-amino-acid chain; its full sequence is Nicotinate-nucleotide--dimethylbenzimidazole phosphoribosyltransferase (357 aa).

The Proton acceptor role is filled by E323.

It belongs to the CobT family.

The enzyme catalyses 5,6-dimethylbenzimidazole + nicotinate beta-D-ribonucleotide = alpha-ribazole 5'-phosphate + nicotinate + H(+). Its pathway is nucleoside biosynthesis; alpha-ribazole biosynthesis; alpha-ribazole from 5,6-dimethylbenzimidazole: step 1/2. Functionally, catalyzes the synthesis of alpha-ribazole-5'-phosphate from nicotinate mononucleotide (NAMN) and 5,6-dimethylbenzimidazole (DMB). The sequence is that of Nicotinate-nucleotide--dimethylbenzimidazole phosphoribosyltransferase from Nitratidesulfovibrio vulgaris (strain ATCC 29579 / DSM 644 / CCUG 34227 / NCIMB 8303 / VKM B-1760 / Hildenborough) (Desulfovibrio vulgaris).